The primary structure comprises 78 residues: Calcium/calmodulin-dependent protein kinase II inhibitor 1 (78 aa).

Residues 41 to 68 (NKRPPKLGQIGRSKRVVIEDDRIDDVLK) are CAMK2 inhibitory domain.

Belongs to the CAMK2N family. In terms of assembly, interacts with CAMK2B; the presence of Ca(2+)/calmodulin increases the interaction but is not essential. Interacts with CAMK2A; this interaction requires CAMK2A activation by Ca(2+).

It is found in the synapse. The protein resides in the cell projection. Its subcellular location is the dendrite. It localises to the postsynaptic density. Its function is as follows. Potent and specific inhibitor of CaM-kinase II (CAMK2). Plays a role in the maintenance of long-term retrieval-induced memory in response to contextual fear. Modulates blood pressure and vascular reactivity via regulation of CAMK2 activity in addition to regulation of left ventricular mass. Mediates the NLRP3 inflammasome in cardiomyocytes via acting as an inhibitor of the MAPK14/p38 and MAPK8/JNK pathways, thereby regulating ventricular remodeling and cardiac rhythm post-myocardial infarction. Negatively effects insulin sensitivity and promotes lipid formation in adipose tissues independent of CAMK2 signaling. This chain is Calcium/calmodulin-dependent protein kinase II inhibitor 1 (CAMK2N1), found in Homo sapiens (Human).